The chain runs to 418 residues: MAFIAALGIFMAGICPAVLCFPNGTLGRDTAVQEDQDNGTQVDSLTLASINTDFAFSLYKELALKNPDKNIVFSPLSISAALAIVSLGAKCNTLQEILEGLKFNLTETPEADIHLGFRHLLHMLSQSGKEEQINIAVSMFIEKHLQILAEFQEKVRSLYQAEAFTADFQQADEARKFINDYVRKETQGKIQELLSDLVERTSMVLVNYIYFKGKWKMPFDPRVTLKSEFYLDEKRSVKVPMMKIEDLTTPYFRDEELSCSVVELKYIGNASALFILPDQGRIEQVEASLQPETLRKWKDSLRPRKIDLLYLPKFLVSTDYSLEDVLSELGIKEVFSAQADLSRVTGTKDLSVSQVVHKAMLEVAEKGTEAAAATGVKFVFRSGRVPTMTVRFDRPFLMVVSHTGVESILFLAKVTNPN.

An N-terminal signal peptide occupies residues 1-28 (MAFIAALGIFMAGICPAVLCFPNGTLGR). N23, N38, N104, and N269 each carry an N-linked (GlcNAc...) asparagine glycan.

This sequence belongs to the serpin family.

It is found in the secreted. This chain is Serine proteinase inhibitor 2.4, found in Apodemus sylvaticus (European woodmouse).